Here is a 187-residue protein sequence, read N- to C-terminus: Elongation factor P (187 aa).

It belongs to the elongation factor P family.

The protein resides in the cytoplasm. It participates in protein biosynthesis; polypeptide chain elongation. Its function is as follows. Involved in peptide bond synthesis. Stimulates efficient translation and peptide-bond synthesis on native or reconstituted 70S ribosomes in vitro. Probably functions indirectly by altering the affinity of the ribosome for aminoacyl-tRNA, thus increasing their reactivity as acceptors for peptidyl transferase. The sequence is that of Elongation factor P from Thermodesulfovibrio yellowstonii (strain ATCC 51303 / DSM 11347 / YP87).